A 1530-amino-acid chain; its full sequence is Regulating synaptic membrane exocytosis protein 2 (1530 aa).

The disordered stretch occupies residues 1–34; the sequence is MSAPLGPRGRPAPTPAASQPPPQPEMPDLSHLTE. A compositionally biased stretch (pro residues) spans 10–25; it reads RPAPTPAASQPPPQPE. Positions 26–194 constitute a RabBD domain; it reads MPDLSHLTEE…TKSGAWFYNS (169 aa). The segment at 126–182 adopts an FYVE-type zinc-finger fold; that stretch reads KGDAPTCGICHKTKFADGCGHNCSYCQTKFCARCGGRVSLRSNKVMWVCNLCRKQQE. Residues Cys-132, Cys-135, Cys-148, Cys-151, Cys-156, Cys-159, Cys-174, and Cys-177 each coordinate Zn(2+). 2 disordered regions span residues 195–608 and 632–655; these read GSNT…ERQK and SGVD…HPVT. Basic and acidic residues-rich tracts occupy residues 210–225, 327–338, 357–375, 391–410, and 419–443; these read LRNE…KLHE, EPGHLNYRDSNR, RDEY…RYRS, EQMR…RHSD, and EDSR…RRAA. Ser-409 is modified (phosphoserine). The span at 458-472 shows a compositional bias: polar residues; it reads AQGQSSYPQRTSNHS. Residues 484 to 501 are compositionally biased toward basic and acidic residues; the sequence is DRPDMRRADSLRKQHHLD. The span at 519-530 shows a compositional bias: polar residues; that stretch reads RNDSLSSDQSES. Basic residues predominate over residues 537–546; that stretch reads RPHKSKKGGK. A compositionally biased stretch (acidic residues) spans 567–577; that stretch reads SCDDVELESES. Composition is skewed to basic and acidic residues over residues 578-592 and 643-653; these read VSEK…RKTS and NEEHSHSDKHP. The region spanning 677–763 is the PDZ domain; that stretch reads DGSVPRDSGA…EPQVELVVSR (87 aa). A Phosphothreonine modification is found at Thr-698. Residues 771-802 are disordered; the sequence is IPDSTHAQLESSSSSFESQKMDRPSISVTSPM. Phosphoserine occurs at positions 800 and 803. Residues 814–937 enclose the C2 1 domain; sequence LSGQLSIKLW…ALLDDEPHWY (124 aa). Disordered regions lie at residues 948 to 982, 1003 to 1122, 1130 to 1149, 1154 to 1187, 1242 to 1263, and 1282 to 1307; these read PLPR…SEVS, LQSS…ERSA, RQMK…RLEQ, KYRS…SRTS, SLEK…TSGK, and KSRS…QRST. The span at 1003-1024 shows a compositional bias: polar residues; that stretch reads LQSSTLSVPEQVMSSNHCSPSG. Residues 1067 to 1086 show a composition bias toward basic and acidic residues; sequence RMDRHRVMDDHYSSDRDRSH. The span at 1088-1101 shows a compositional bias: polar residues; sequence RTGSVQTSPSSTPG. A Phosphoserine modification is found at Ser-1095. Basic and acidic residues predominate over residues 1154–1165; that stretch reads KYRSGWDPHRGA. A Phosphoserine modification is found at Ser-1175. The segment covering 1178-1187 has biased composition (low complexity); sequence SDVSAVSRTS. A Phosphoserine modification is found at Ser-1251. In terms of domain architecture, C2 2 spans 1376-1494; it reads AMGDIQVGMM…ELSNMVIGWF (119 aa). Ser-1515 and Ser-1518 each carry phosphoserine.

Interacts with TSPOAP1 and RIMBP2. Interacts with PPFIA3 and PPFIA4. Interacts via its zinc finger with the first C2 domain of UNC13A. Forms a complex consisting of UNC13A, RIMS2 and RAB3A. Heterodimer with PCLO. Part of a ternary complex involving PCLO and EPAC2. Interacts with RAB3A and RAB3B that have been activated by GTP-binding. Interacts with RAB3C, RAB3D and RAB26. Detected in testis, pituitary and an insulinoma cell line. Detected at low levels in cerebellar cortex.

The protein resides in the synapse. It localises to the synaptosome. Its function is as follows. Rab effector involved in exocytosis. May act as scaffold protein. Plays a role in dendrite formation by melanocytes. In Mus musculus (Mouse), this protein is Regulating synaptic membrane exocytosis protein 2 (Rims2).